The primary structure comprises 642 residues: MEKISVAVRFRPPTTAAPAADQSPSSTGGDREWRVDDDTRITLLHRSAPVPGASFAFDHVFDGAATNERIYGVLVRSLIRAAVDGFNGTAFAYGQTSSGKTFTMNGSADHPGIIPLAVRDVFDTAREVSDREFLIRVSYMEIYNEEINDLLTLGSEKLPIHESLERGVYVSGLREEIVNSAEQVFKLLELGEANRHFGETNMNVRSSRSHTIFRMVIESSAKNHMDSGDAIRVSVLNLVDLAGSERIAKTGAGGVRLKEGKHINKSLMILGNVINKLSENGKQRGHIPYRDSKLTRILQPALGGNAKTSIICTAAPEEIHVEETRGTLQFASRAKCVSNCAQVNEILTDAALLKRQKQEIEELRKKLQGSHSEVLEQVILKQRNDMHKSELERDRLAMELDEERRLRETLEHRLAEQQKMLDGISNTSISPDQFTDSIQFESLKTPTSKERPAEFVASRANYSKDVEFSPIPENLGTVADEDLWMQLNKGCVTDLEMLEMTPGFKCAPSLADDKASVATPDEEPIDARCQRLEKDCTADRQQLEDSKAWRAALEEERDTLKRENSSLLDALAKARQDADHLVADRLEALRELDMEKSRMDELKQEIKLFSQAFSLRQGQLTSLYTKSKAIVENCKTSQLALP.

The Kinesin motor domain maps to 3–337 (KISVAVRFRP…LQFASRAKCV (335 aa)). A compositionally biased stretch (low complexity) spans 12–27 (PPTTAAPAADQSPSST). Positions 12–33 (PPTTAAPAADQSPSSTGGDREW) are disordered. 94–101 (GQTSSGKT) is an ATP binding site. 2 coiled-coil regions span residues 343 to 428 (VNEI…SNTS) and 540 to 612 (RQQL…FSQA).

The protein belongs to the TRAFAC class myosin-kinesin ATPase superfamily. Kinesin family. KIN-7 subfamily.

This is Kinesin-like protein KIN-7L from Oryza sativa subsp. japonica (Rice).